Reading from the N-terminus, the 356-residue chain is L-Lys-D/L-Arg epimerase (356 aa).

Substrate contacts are provided by residues T135 and 160–162 (KVK). D190, E216, and D241 together coordinate Mg(2+). Substrate-binding positions include K266, D296, and 319–321 (DLD).

The protein belongs to the mandelate racemase/muconate lactonizing enzyme family. It depends on Mg(2+) as a cofactor.

Functionally, catalyzes the epimerization of L-Lys-L-Arg to L-Lys-D-Arg. Can also catalyze the epimerization of other cationic dipeptides, such as L-Arg-L-Arg, L-Lys-L-Lys and L-Lys-L-His, but with lower efficiency (in vitro). The protein is L-Lys-D/L-Arg epimerase of Methylococcus capsulatus (strain ATCC 33009 / NCIMB 11132 / Bath).